Consider the following 317-residue polypeptide: Tyrosine--tRNA ligase (317 aa).

Residue Tyr-33 coordinates L-tyrosine. The 'HIGH' region motif lies at 38 to 46 (PSGKIHMGH). The L-tyrosine site is built by Tyr-155, Gln-159, Asp-162, and Gln-177. Positions 211-215 (KMSSS) match the 'KMSKS' region motif. Ser-214 lines the ATP pocket.

The protein belongs to the class-I aminoacyl-tRNA synthetase family. TyrS type 3 subfamily. As to quaternary structure, homodimer.

The protein resides in the cytoplasm. The catalysed reaction is tRNA(Tyr) + L-tyrosine + ATP = L-tyrosyl-tRNA(Tyr) + AMP + diphosphate + H(+). Its function is as follows. Catalyzes the attachment of tyrosine to tRNA(Tyr) in a two-step reaction: tyrosine is first activated by ATP to form Tyr-AMP and then transferred to the acceptor end of tRNA(Tyr). In Methanococcoides burtonii (strain DSM 6242 / NBRC 107633 / OCM 468 / ACE-M), this protein is Tyrosine--tRNA ligase.